A 1390-amino-acid chain; its full sequence is DNA-directed RNA polymerase subunit beta'' (1390 aa).

4 residues coordinate Zn(2+): cysteine 224, cysteine 294, cysteine 301, and cysteine 304.

The protein belongs to the RNA polymerase beta' chain family. RpoC2 subfamily. In terms of assembly, in plastids the minimal PEP RNA polymerase catalytic core is composed of four subunits: alpha, beta, beta', and beta''. When a (nuclear-encoded) sigma factor is associated with the core the holoenzyme is formed, which can initiate transcription. Requires Zn(2+) as cofactor.

The protein localises to the plastid. It is found in the chloroplast. The enzyme catalyses RNA(n) + a ribonucleoside 5'-triphosphate = RNA(n+1) + diphosphate. Functionally, DNA-dependent RNA polymerase catalyzes the transcription of DNA into RNA using the four ribonucleoside triphosphates as substrates. The protein is DNA-directed RNA polymerase subunit beta'' of Ceratophyllum demersum (Rigid hornwort).